The sequence spans 160 residues: Deoxyuridine 5'-triphosphate nucleotidohydrolase (160 aa).

The dUMP site is built by Ser-80, Gly-93, Asp-96, Tyr-99, Lys-104, Arg-149, Phe-154, and Gly-155.

Belongs to the dUTPase family. Homotrimer. Mg(2+) is required as a cofactor.

The enzyme catalyses dUTP + H2O = dUMP + diphosphate + H(+). The protein operates within pyrimidine metabolism; dUMP biosynthesis; dUMP from dCTP (dUTP route): step 2/2. Involved in nucleotide metabolism via production of dUMP, the immediate precursor of thymidine nucleotides, and decreases the intracellular concentration of dUTP so that uracil cannot be incorporated into DNA. The chain is Deoxyuridine 5'-triphosphate nucleotidohydrolase (DUT1) from Debaryomyces hansenii (strain ATCC 36239 / CBS 767 / BCRC 21394 / JCM 1990 / NBRC 0083 / IGC 2968) (Yeast).